Reading from the N-terminus, the 204-residue chain is Sec-independent protein translocase protein TatB (204 aa).

Residues 1–21 (MFDIGFSELLLIFIVGLVVLG) form a helical membrane-spanning segment. Residues 154 to 166 (VVSSVDSIQNGQS) are compositionally biased toward polar residues. The interval 154 to 204 (VVSSVDSIQNGQSDLELDAQAEVDRQLAAMMDKYAPPDDVAENPISTEKTS) is disordered.

It belongs to the TatB family. The Tat system comprises two distinct complexes: a TatABC complex, containing multiple copies of TatA, TatB and TatC subunits, and a separate TatA complex, containing only TatA subunits. Substrates initially bind to the TatABC complex, which probably triggers association of the separate TatA complex to form the active translocon.

The protein resides in the cell inner membrane. Part of the twin-arginine translocation (Tat) system that transports large folded proteins containing a characteristic twin-arginine motif in their signal peptide across membranes. Together with TatC, TatB is part of a receptor directly interacting with Tat signal peptides. TatB may form an oligomeric binding site that transiently accommodates folded Tat precursor proteins before their translocation. In Mannheimia succiniciproducens (strain KCTC 0769BP / MBEL55E), this protein is Sec-independent protein translocase protein TatB.